The chain runs to 806 residues: ATP-dependent zinc metalloprotease FTSH 9, chloroplastic (806 aa).

Residues 1–62 (MTSIELLSPL…SSIQLPQSVP (62 aa)) constitute a chloroplast transit peptide. Positions 84–116 (SSRTIVNCQEGDQKASSSEGEGKTNKDKGRKQG) are disordered. Transmembrane regions (helical) follow at residues 133 to 153 (IIQA…MFVV) and 271 to 291 (GGFF…AGLL). Residue 369–376 (GLPGTGKT) participates in ATP binding. His594 is a binding site for Zn(2+). Glu595 is a catalytic residue. 2 residues coordinate Zn(2+): His598 and Asp677.

The protein in the N-terminal section; belongs to the AAA ATPase family. This sequence in the C-terminal section; belongs to the peptidase M41 family. Zn(2+) serves as cofactor.

It localises to the plastid. It is found in the chloroplast thylakoid membrane. Its function is as follows. Probable ATP-dependent zinc metallopeptidase. The chain is ATP-dependent zinc metalloprotease FTSH 9, chloroplastic (FTSH9) from Arabidopsis thaliana (Mouse-ear cress).